A 539-amino-acid polypeptide reads, in one-letter code: Laccase-1 (539 aa).

An N-terminal signal peptide occupies residues 1 to 21 (MAFTAISLFLAALGVINTAFA). 2 consecutive Plastocyanin-like domains span residues 37–154 (AEVN…YDPE) and 166–309 (ESTV…HYLG). N78 carries N-linked (GlcNAc...) asparagine glycosylation. H88 and H90 together coordinate Cu cation. Disulfide bonds link C109/C513 and C141/C228. N120 carries an N-linked (GlcNAc...) asparagine glycan. Cu cation is bound by residues H133 and H135. N-linked (GlcNAc...) asparagine glycans are attached at residues N202, N233, N240, N293, N318, N353, N385, and N405. One can recognise a Plastocyanin-like 3 domain in the interval 374–495 (SPTVPVLLQI…GFAVVMAEDP (122 aa)). The Cu cation site is built by H421, H424, and H426. N-linked (GlcNAc...) asparagine glycosylation is present at N457. Cu cation contacts are provided by H476, C477, H478, and H482. N-linked (GlcNAc...) asparagine glycosylation occurs at N532.

It belongs to the multicopper oxidase family. It depends on Cu cation as a cofactor.

The protein localises to the secreted. It catalyses the reaction 4 hydroquinone + O2 = 4 benzosemiquinone + 2 H2O. With respect to regulation, inhibited by chloride ions. Inhibited by citrate. Inhibited by oxalate. Activated by acetate. Its function is as follows. In vitro, has activity towards 2,2'-azino-bis(3-ethylbenzthiazoline-6-sulfonic acid) (ABTS), 2,6-dimethoxy-phenol, and guaiacol. Although brown rot fungi preferentially degrade hemicellulose and cellulose, the enzyme may contribute to generating small amounts of lignin breakdown products required for catalytic reactions. This Fomitopsis schrenkii (Brown rot fungus) protein is Laccase-1.